The chain runs to 88 residues: Toxin RelE2 (88 aa).

The protein belongs to the RelE toxin family.

Its function is as follows. Toxic component of a type II toxin-antitoxin (TA) system. Its toxic effect is neutralized by coexpression with cognate antitoxin RelB2 but no other ParD or RelB antitoxin. The chain is Toxin RelE2 (relE2) from Caulobacter vibrioides (strain ATCC 19089 / CIP 103742 / CB 15) (Caulobacter crescentus).